A 445-amino-acid chain; its full sequence is ATP-dependent protease ATPase subunit HslU (445 aa).

Residues Ile17, 59 to 64, Asp254, Glu319, and Arg391 each bind ATP; that span reads GVGKTE.

Belongs to the ClpX chaperone family. HslU subfamily. As to quaternary structure, a double ring-shaped homohexamer of HslV is capped on each side by a ring-shaped HslU homohexamer. The assembly of the HslU/HslV complex is dependent on binding of ATP.

The protein localises to the cytoplasm. In terms of biological role, ATPase subunit of a proteasome-like degradation complex; this subunit has chaperone activity. The binding of ATP and its subsequent hydrolysis by HslU are essential for unfolding of protein substrates subsequently hydrolyzed by HslV. HslU recognizes the N-terminal part of its protein substrates and unfolds these before they are guided to HslV for hydrolysis. In Pseudomonas syringae pv. tomato (strain ATCC BAA-871 / DC3000), this protein is ATP-dependent protease ATPase subunit HslU.